The primary structure comprises 426 residues: Gamma-glutamyl phosphate reductase (426 aa).

This sequence belongs to the gamma-glutamyl phosphate reductase family.

The protein resides in the cytoplasm. It catalyses the reaction L-glutamate 5-semialdehyde + phosphate + NADP(+) = L-glutamyl 5-phosphate + NADPH + H(+). The protein operates within amino-acid biosynthesis; L-proline biosynthesis; L-glutamate 5-semialdehyde from L-glutamate: step 2/2. Catalyzes the NADPH-dependent reduction of L-glutamate 5-phosphate into L-glutamate 5-semialdehyde and phosphate. The product spontaneously undergoes cyclization to form 1-pyrroline-5-carboxylate. This Nitrobacter winogradskyi (strain ATCC 25391 / DSM 10237 / CIP 104748 / NCIMB 11846 / Nb-255) protein is Gamma-glutamyl phosphate reductase.